Reading from the N-terminus, the 312-residue chain is Transcriptional regulator protein Pur-beta (312 aa).

Residues 1-32 are disordered; that stretch reads MADGDSGSERGGGGGPCGFQPASRGGGEQETQ. The residue at position 2 (Ala-2) is an N-acetylalanine. Ser-6 and Ser-8 each carry phosphoserine. Position 24 is an omega-N-methylarginine (Arg-24). Residues 28–254 form a DNA-binding region; it reads EQETQELASK…LRVSEVKPSY (227 aa). Thr-31 is modified (phosphothreonine). A Phosphoserine modification is found at Ser-101. Arg-152 carries the post-translational modification Omega-N-methylarginine. Residue Lys-267 is modified to N6-acetyllysine. The span at 284-295 shows a compositional bias: basic and acidic residues; it reads ERQRDKLYERRG. The interval 284 to 312 is disordered; it reads ERQRDKLYERRGGGSGGGEESEGEEVDED. Arg-294 is subject to Omega-N-methylarginine. 2 positions are modified to phosphoserine: Ser-298 and Ser-304. The span at 302–312 shows a compositional bias: acidic residues; that stretch reads EESEGEEVDED.

The protein belongs to the PUR DNA-binding protein family. Homodimer, heterodimer with PURA and heterotrimer with PURA and YBX1/Y-box protein 1. Interacts with MYOCD and SRF. In terms of tissue distribution, expressed in myocardium of heart failure patients.

It is found in the nucleus. Its function is as follows. Transcriptional regulator which can act as an activator or a repressor. Represses the transcription of ACTA2 in fibroblasts and smooth muscle cells via its ability to interact with the purine-rich strand of a MCAT- containing element in the 5' flanking region of the gene. Represses the transcription of MYOCD, capable of repressing all isoforms of MYOCD but the magnitude of the repressive effects is most notable for the SMC- specific isoforms. Promotes hepatic glucose production by activating the transcription of ADCY6, leading to cAMP accumulation, increased PKA activity, CREB activation, and increased transcription of PCK1 and G6PC genes. Has capacity to bind repeated elements in single-stranded DNA such as the purine-rich single strand of the PUR element located upstream of the MYC gene. Participates in transcriptional and translational regulation of alpha-MHC expression in cardiac myocytes by binding to the purine-rich negative regulatory (PNR) element Modulates constitutive liver galectin-3 gene transcription by binding to its promoter. May play a role in the dendritic transport of a subset of mRNAs. This chain is Transcriptional regulator protein Pur-beta (PURB), found in Homo sapiens (Human).